The sequence spans 600 residues: Aspartate--tRNA(Asp/Asn) ligase (600 aa).

Glu174 serves as a coordination point for L-aspartate. The interval 198–201 (QLFK) is aspartate. Arg220 provides a ligand contact to L-aspartate. ATP is bound by residues 220 to 222 (RDE) and Gln229. L-aspartate is bound at residue His457. ATP is bound at residue Glu491. Residue Arg498 participates in L-aspartate binding. Residue 543-546 (GLDR) participates in ATP binding.

Belongs to the class-II aminoacyl-tRNA synthetase family. Type 1 subfamily. In terms of assembly, homodimer.

It localises to the cytoplasm. The catalysed reaction is tRNA(Asx) + L-aspartate + ATP = L-aspartyl-tRNA(Asx) + AMP + diphosphate. Its function is as follows. Aspartyl-tRNA synthetase with relaxed tRNA specificity since it is able to aspartylate not only its cognate tRNA(Asp) but also tRNA(Asn). Reaction proceeds in two steps: L-aspartate is first activated by ATP to form Asp-AMP and then transferred to the acceptor end of tRNA(Asp/Asn). The polypeptide is Aspartate--tRNA(Asp/Asn) ligase (Burkholderia lata (strain ATCC 17760 / DSM 23089 / LMG 22485 / NCIMB 9086 / R18194 / 383)).